Here is a 370-residue protein sequence, read N- to C-terminus: Aminomethyltransferase (370 aa).

This sequence belongs to the GcvT family. As to quaternary structure, the glycine cleavage system is composed of four proteins: P, T, L and H.

It catalyses the reaction N(6)-[(R)-S(8)-aminomethyldihydrolipoyl]-L-lysyl-[protein] + (6S)-5,6,7,8-tetrahydrofolate = N(6)-[(R)-dihydrolipoyl]-L-lysyl-[protein] + (6R)-5,10-methylene-5,6,7,8-tetrahydrofolate + NH4(+). The glycine cleavage system catalyzes the degradation of glycine. The polypeptide is Aminomethyltransferase (Clostridium botulinum (strain Loch Maree / Type A3)).